The sequence spans 522 residues: Glucose-1-phosphate adenylyltransferase large subunit, chloroplastic/amyloplastic (522 aa).

Residues 1–62 (MSSMQFSSVL…RGPAATGAQC (62 aa)) constitute a chloroplast transit peptide. The segment covering 28-42 (SERLKVGDSSSIRHE) has biased composition (basic and acidic residues). Residues 28-54 (SERLKVGDSSSIRHERASRRMCNGGRG) are disordered.

It belongs to the bacterial/plant glucose-1-phosphate adenylyltransferase family. Heterotetramer. As to expression, abundantly expressed in the whole grains, a slightly less abundant expression is seen in leaves, while a low level expression is seen in the roots. A greater expression is seen in the endosperm than in the embryo and pericarp layers.

The protein localises to the plastid. It localises to the chloroplast. Its subcellular location is the amyloplast. The enzyme catalyses alpha-D-glucose 1-phosphate + ATP + H(+) = ADP-alpha-D-glucose + diphosphate. The protein operates within glycan biosynthesis; starch biosynthesis. Insensitive to 3'phosphoglycerate and orthophosphate. Functionally, this protein plays a role in synthesis of starch. It catalyzes the synthesis of the activated glycosyl donor, ADP-glucose from Glc-1-P and ATP. In Triticum aestivum (Wheat), this protein is Glucose-1-phosphate adenylyltransferase large subunit, chloroplastic/amyloplastic (AGP-L).